The following is a 355-amino-acid chain: MSSSKMNGRSIRINRVPATIFAILLTIVLVYFLNFHQEERPAIYGKLRSDNPNRVNLRKMLIAAIQASQRGGLEVLDVARSRQLKVRSKGQTDEGVNDPFTDADGRSHCVMKQGLQRIFPRVRIFSEEDKEHCKESHSYDLDPTVLHETAQVPDVSVNAQDVTVWVDPLDATKEFTEELYEYVTTMVCVAVAGRPVIGVIHSPFNGQTAWAWVGNSMSEYLAGLHPPHGQENELPIITVSRSHTAGAKDLARGIFGEQVNLLTAAGAGYKVLQVVANNATAYLHTSKIKKWDICAGDAILHALGGTMTTLNDQLIRYGPDESPVNTEGLLATLEKHDKYMDQLVKYRTAHNGQLA.

A helical transmembrane segment spans residues 16–36 (VPATIFAILLTIVLVYFLNFH). Glu-127, Asp-167, Leu-169, Asp-170, and Asp-292 together coordinate Mg(2+). A substrate-binding site is contributed by Glu-127. Residues 169 to 172 (LDAT) and Asp-292 contribute to the substrate site.

The protein belongs to the inositol monophosphatase superfamily. The cofactor is Mg(2+).

It is found in the membrane. The catalysed reaction is a myo-inositol phosphate + H2O = myo-inositol + phosphate. Its pathway is polyol metabolism; myo-inositol biosynthesis; myo-inositol from D-glucose 6-phosphate: step 2/2. The polypeptide is Putative inositol monophosphatase 3 (Drosophila pseudoobscura pseudoobscura (Fruit fly)).